The chain runs to 73 residues: Sec-independent protein translocase protein TatA (73 aa).

Residues 1-21 (MGSFSIGHWLIVLAIIVLLFG) traverse the membrane as a helical segment. The segment at 43–73 (MEDTTPEKSEKVEHKEESATSQKIEETTKNA) is disordered.

Belongs to the TatA/E family. In terms of assembly, the Tat system comprises two distinct complexes: a TatABC complex, containing multiple copies of TatA, TatB and TatC subunits, and a separate TatA complex, containing only TatA subunits. Substrates initially bind to the TatABC complex, which probably triggers association of the separate TatA complex to form the active translocon.

It localises to the cell inner membrane. Its function is as follows. Part of the twin-arginine translocation (Tat) system that transports large folded proteins containing a characteristic twin-arginine motif in their signal peptide across membranes. TatA could form the protein-conducting channel of the Tat system. The polypeptide is Sec-independent protein translocase protein TatA (Campylobacter concisus (strain 13826)).